We begin with the raw amino-acid sequence, 420 residues long: MLSNLSKSLLSKGKFINKNNLLKNKRSFGTIVPGDKFEWNDPLSLESLLTEEEVMIRDQVNKFCQDELMPRIQMAYRDEKFDREIMREYGKMGMLGATIPAYGGVSHVAYGLMANAVEKVDSGYRSAMSVQSSLVMHPINTFGTDAQKSKYLDGLASGDLVGCFGLTEPNAGSDPAGMQTRAVKNSAGNYVLNGTKTWITNSPIADVFVVWAKVENGDIRGFVLEKGMKGLSAPKIEGKLSLRASITGMIVMEDVEVPPTAMFPEVKGLRGPFSCLNKARYGIGWGSLGAAEFCYSTARQYGLDRKQFGKPLAANQLYQKKLADMATEISLGLQACYQVGRLIDAGKATPERISLIKRNSCGKSLDIARQSRDMLGGNGIADEYHVIRHAANLETVNTYEGTHDIHALILGRAITGIPSF.

125–126 is a binding site for substrate; sequence RS. FAD is bound by residues 164–167, serine 173, and 198–200; these read FGLT and WIT. Residue serine 173 coordinates substrate. Substrate-binding positions include 273–277 and arginine 280; that span reads FSCLN. Glutamate 400 (proton acceptor) is an active-site residue. 2 residues coordinate FAD: threonine 402 and phenylalanine 420.

The protein belongs to the acyl-CoA dehydrogenase family. It depends on FAD as a cofactor.

It is found in the mitochondrion matrix. It carries out the reaction glutaryl-CoA + oxidized [electron-transfer flavoprotein] + 2 H(+) = (2E)-butenoyl-CoA + reduced [electron-transfer flavoprotein] + CO2. It functions in the pathway amino-acid metabolism; lysine degradation. It participates in amino-acid metabolism; tryptophan metabolism. The sequence is that of Glutaryl-CoA dehydrogenase, mitochondrial (gcdh) from Dictyostelium discoideum (Social amoeba).